A 142-amino-acid chain; its full sequence is Aspartate 1-decarboxylase (142 aa).

Serine 25 serves as the catalytic Schiff-base intermediate with substrate; via pyruvic acid. Serine 25 is subject to Pyruvic acid (Ser). Substrate is bound at residue threonine 57. Tyrosine 58 (proton donor) is an active-site residue. 73–75 serves as a coordination point for substrate; sequence GAA.

Belongs to the PanD family. In terms of assembly, heterooctamer of four alpha and four beta subunits. Requires pyruvate as cofactor. Is synthesized initially as an inactive proenzyme, which is activated by self-cleavage at a specific serine bond to produce a beta-subunit with a hydroxyl group at its C-terminus and an alpha-subunit with a pyruvoyl group at its N-terminus.

The protein resides in the cytoplasm. It carries out the reaction L-aspartate + H(+) = beta-alanine + CO2. Its pathway is cofactor biosynthesis; (R)-pantothenate biosynthesis; beta-alanine from L-aspartate: step 1/1. In terms of biological role, catalyzes the pyruvoyl-dependent decarboxylation of aspartate to produce beta-alanine. In Arthrobacter sp. (strain FB24), this protein is Aspartate 1-decarboxylase.